The following is a 190-amino-acid chain: Lipocalin Can f 6.0101 (190 aa).

The N-terminal stretch at 1 to 15 (MKLLLLCLGLILVHA) is a signal peptide. The igE-binding stretch occupies residues 43–54 (SDIKEKIEENGS). 2 N-linked (GlcNAc...) asparagine glycosylation sites follow: N52 and N67. The interval 76 to 83 (TKVNGKCT) is igE-binding. C82 and C175 are oxidised to a cystine. An N-linked (GlcNAc...) asparagine glycan is attached at N90. The tract at residues 91 to 97 (KTEKDGE) is igE-binding. The tract at residues 100–109 (VVHDGYNLFR) is no IgE-binding. 2 igE-binding regions span residues 125-132 (NVNQEQEF) and 139-152 (GRKP…KEKF).

The protein belongs to the calycin superfamily. Lipocalin family. In terms of assembly, monomer. As to expression, expressed in saliva (at protein level). Expressed in dander (at protein level). According to PubMed:22104604, expressed in submaxillary gland. In contrast, according to PubMed:22515174, not expressed in submaxillary gland. Expressed in bladder and skin, but not in tongue.

It is found in the secreted. The chain is Lipocalin Can f 6.0101 from Canis lupus familiaris (Dog).